Consider the following 183-residue polypeptide: Ribulose bisphosphate carboxylase small subunit, chloroplastic (183 aa).

A chloroplast-targeting transit peptide spans 1–58 (MASSMLSTAAVACINRASPAQASMVAPFTGLKSTSAFPTTRKTTTDITSIASNGGRVQ).

The protein belongs to the RuBisCO small chain family. As to quaternary structure, heterohexadecamer of 8 large and 8 small subunits.

It localises to the plastid. The protein localises to the chloroplast. Functionally, ruBisCO catalyzes two reactions: the carboxylation of D-ribulose 1,5-bisphosphate, the primary event in carbon dioxide fixation, as well as the oxidative fragmentation of the pentose substrate. Both reactions occur simultaneously and in competition at the same active site. Although the small subunit is not catalytic it is essential for maximal activity. The protein is Ribulose bisphosphate carboxylase small subunit, chloroplastic of Hevea brasiliensis (Para rubber tree).